The sequence spans 331 residues: UPF0284 protein PF0303 (331 aa).

Belongs to the UPF0284 family.

The sequence is that of UPF0284 protein PF0303 from Pyrococcus furiosus (strain ATCC 43587 / DSM 3638 / JCM 8422 / Vc1).